Consider the following 320-residue polypeptide: GTP 3',8-cyclase (320 aa).

The 224-residue stretch at 4 to 227 (LYSRRINYMR…METEKSSPAK (224 aa)) folds into the Radical SAM core domain. R13 serves as a coordination point for GTP. Residues C20 and C24 each contribute to the [4Fe-4S] cluster site. Residue Y26 participates in S-adenosyl-L-methionine binding. [4Fe-4S] cluster is bound at residue C27. R63 provides a ligand contact to GTP. An S-adenosyl-L-methionine-binding site is contributed by G67. Residue T94 participates in GTP binding. S118 is a binding site for S-adenosyl-L-methionine. K155 is a binding site for GTP. M189 contributes to the S-adenosyl-L-methionine binding site. Residues C249 and C252 each coordinate [4Fe-4S] cluster. Residue 254–256 (RVR) participates in GTP binding. C266 contributes to the [4Fe-4S] cluster binding site. Residues 300 to 312 (KHDLLTDSHEESN) show a composition bias toward basic and acidic residues. Residues 300–320 (KHDLLTDSHEESNRGMSQIGG) form a disordered region.

Belongs to the radical SAM superfamily. MoaA family. As to quaternary structure, monomer and homodimer. [4Fe-4S] cluster is required as a cofactor.

The enzyme catalyses GTP + AH2 + S-adenosyl-L-methionine = (8S)-3',8-cyclo-7,8-dihydroguanosine 5'-triphosphate + 5'-deoxyadenosine + L-methionine + A + H(+). It functions in the pathway cofactor biosynthesis; molybdopterin biosynthesis. In terms of biological role, catalyzes the cyclization of GTP to (8S)-3',8-cyclo-7,8-dihydroguanosine 5'-triphosphate. This Alkaliphilus oremlandii (strain OhILAs) (Clostridium oremlandii (strain OhILAs)) protein is GTP 3',8-cyclase.